Here is a 239-residue protein sequence, read N- to C-terminus: 1-(5-phosphoribosyl)-5-[(5-phosphoribosylamino)methylideneamino] imidazole-4-carboxamide isomerase (239 aa).

Asp12 (proton acceptor) is an active-site residue. Catalysis depends on Asp132, which acts as the Proton donor.

It belongs to the HisA/HisF family.

It localises to the cytoplasm. It catalyses the reaction 1-(5-phospho-beta-D-ribosyl)-5-[(5-phospho-beta-D-ribosylamino)methylideneamino]imidazole-4-carboxamide = 5-[(5-phospho-1-deoxy-D-ribulos-1-ylimino)methylamino]-1-(5-phospho-beta-D-ribosyl)imidazole-4-carboxamide. The protein operates within amino-acid biosynthesis; L-histidine biosynthesis; L-histidine from 5-phospho-alpha-D-ribose 1-diphosphate: step 4/9. This is 1-(5-phosphoribosyl)-5-[(5-phosphoribosylamino)methylideneamino] imidazole-4-carboxamide isomerase from Natronomonas pharaonis (strain ATCC 35678 / DSM 2160 / CIP 103997 / JCM 8858 / NBRC 14720 / NCIMB 2260 / Gabara) (Halobacterium pharaonis).